The following is a 228-amino-acid chain: Leucokinins (228 aa).

The N-terminal stretch at 1-18 is a signal peptide; the sequence is MAMLLQVALPLLAAVSWG. The propeptide occupies 19 to 164; that stretch reads WELNENDDSL…PRFSPVSAIQ (146 aa). Residues 80–118 are disordered; it reads EFSENNEAEDKSPTSAQNTQEHIPGNNFPPPAASNPPVN. A glycine amide mark is found at glycine 180 and glycine 193. Positions 197–209 are excised as a propeptide; it reads NTGRVHRQPKVVI. Glycine 217 carries the glycine amide modification. A propeptide spanning residues 221-228 is cleaved from the precursor; it reads NQKDDNVF.

It localises to the secreted. Its function is as follows. Stimulates both fluid secretion by the Malpighian tubules and hindgut contractions. Depolarize the transepithelial voltage of the Malpighian tubules in concentrations of less than 10(-9) M and increase the frequency of hindgut contractions at concentrations above 10(-8) M. This is Leucokinins from Aedes aegypti (Yellowfever mosquito).